We begin with the raw amino-acid sequence, 85 residues long: Large ribosomal subunit protein bL31B (85 aa).

It belongs to the bacterial ribosomal protein bL31 family. Type B subfamily. As to quaternary structure, part of the 50S ribosomal subunit.

This is Large ribosomal subunit protein bL31B from Aliivibrio salmonicida (strain LFI1238) (Vibrio salmonicida (strain LFI1238)).